Consider the following 538-residue polypeptide: Putative cysteine ligase BshC (538 aa).

Residues 460–484 (KINEQIELLERMLKRNVEKKHEVEL) are a coiled coil.

This sequence belongs to the BshC family.

Functionally, involved in bacillithiol (BSH) biosynthesis. May catalyze the last step of the pathway, the addition of cysteine to glucosamine malate (GlcN-Mal) to generate BSH. The polypeptide is Putative cysteine ligase BshC (Bacillus cereus (strain AH820)).